The primary structure comprises 465 residues: Argininosuccinate lyase (465 aa).

Belongs to the lyase 1 family. Argininosuccinate lyase subfamily.

The protein localises to the cytoplasm. It carries out the reaction 2-(N(omega)-L-arginino)succinate = fumarate + L-arginine. It functions in the pathway amino-acid biosynthesis; L-arginine biosynthesis; L-arginine from L-ornithine and carbamoyl phosphate: step 3/3. In Hyphomonas neptunium (strain ATCC 15444), this protein is Argininosuccinate lyase.